The primary structure comprises 135 residues: Probable histone H2A.1 (135 aa).

The protein belongs to the histone H2A family. As to quaternary structure, the nucleosome is a histone octamer containing two molecules each of H2A, H2B, H3 and H4 assembled in one H3-H4 heterotetramer and two H2A-H2B heterodimers. The octamer wraps approximately 147 bp of DNA.

The protein localises to the nucleus. It is found in the chromosome. Core component of nucleosome. Nucleosomes wrap and compact DNA into chromatin, limiting DNA accessibility to the cellular machineries which require DNA as a template. Histones thereby play a central role in transcription regulation, DNA repair, DNA replication and chromosomal stability. DNA accessibility is regulated via a complex set of post-translational modifications of histones, also called histone code, and nucleosome remodeling. This Oryza sativa subsp. japonica (Rice) protein is Probable histone H2A.1.